Consider the following 804-residue polypeptide: MSKHQTQVVGDFTIGPEIGRGSFANVYKGYDNRTKAPVAVKSVFRSRLKNQKLVENLEIEISILKNLKNPHIVALLDCVKTDQYFHLFMEYCSLGDLSYFIRRRDQLVQTHPLISSILERYPSPPNSHGLNKVLVVNFLKQLASALEFLRDQNLVHRDIKPQNLLLSPPVHSKEEFKRKGYSGLWELPVLKIADFGFARFLPSTSMAETLCGSPLYMAPEILRYEKYNAKADLWSVGAVIYEMSVGKPPFRASNHVELLRKIEKSKDEITFPVSAEVPDDLVRLICGLLKANPTERMGFQEFFNDPLIVYDVQCADEPLECSNVDEQLFISEYLPNLKTSPPAKPAPETIKEESEEEERAERAPTDSLLIGKEADLRIPRPMEGSGKDEVIKKLINKSSPPPDTVKDGQIKKGARRDKDDFVYEKDYVVVEKRTVEVNAIADELAKAGAGAVAIPSPHLGTNEHSAANPSGPTETQTQRRFSPSSRTSSIGSNRRPSWGDRKMPISISPTNALTKALGYTSNRLFGQQQQQPQQAQQAAIESAITNVTTNLLATKTLRPLKPSQETSLEDTEVINQLELLATMAHAISLFAEVKFSQLIPLPPSSSSPGSADYDEMYQNDAFPPQMVKSISSEGVALYVETLSLLAKAMSIASDWWHQNSSKPSTSPKLNDLVQWIRSRFNESLEKAEFLRLRLADANEQLVGESGSSLNKPVVAEKLIFDRALEMSRTAAMNELKNEDLLGCELSYSTAIWMLEALLSNDEEPVTGNEKLDAEDKKIIELFINSIGNRLKVLRQKIDKQGVRS.

Residues 12–308 (FTIGPEIGRG…FQEFFNDPLI (297 aa)) form the Protein kinase domain. Residues 18–26 (IGRGSFANV) and Lys-41 each bind ATP. Asp-158 (proton acceptor) is an active-site residue. Disordered stretches follow at residues 339–364 (TSPP…ERAP), 395–415 (INKS…KGAR), and 455–506 (PSPH…MPIS). The segment covering 404–415 (TVKDGQIKKGAR) has biased composition (basic and acidic residues). Polar residues predominate over residues 462–495 (NEHSAANPSGPTETQTQRRFSPSSRTSSIGSNRR).

It belongs to the protein kinase superfamily. Ser/Thr protein kinase family. APG1/unc-51/ULK1 subfamily. Homodimer. Forms a ternary complex with ATG13 and ATG17.

It is found in the cytoplasm. Its subcellular location is the preautophagosomal structure membrane. It carries out the reaction L-seryl-[protein] + ATP = O-phospho-L-seryl-[protein] + ADP + H(+). The enzyme catalyses L-threonyl-[protein] + ATP = O-phospho-L-threonyl-[protein] + ADP + H(+). In terms of biological role, serine/threonine protein kinase involved in the cytoplasm to vacuole transport (Cvt) and found to be essential in autophagy, where it is required for the formation of autophagosomes. Involved in the clearance of protein aggregates which cannot be efficiently cleared by the proteasome. Required for selective autophagic degradation of the nucleus (nucleophagy) as well as for mitophagy which contributes to regulate mitochondrial quantity and quality by eliminating the mitochondria to a basal level to fulfill cellular energy requirements and preventing excess ROS production. Also involved in endoplasmic reticulum-specific autophagic process, in selective removal of ER-associated degradation (ERAD) substrates. Plays a key role in ATG9 and ATG23 cycling through the pre-autophagosomal structure and is necessary to promote ATG18 binding to ATG9 through phosphorylation of ATG9. Catalyzes phosphorylation of ATG4, decreasing the interaction between ATG4 and ATG8 and impairing deconjugation of PE-conjugated forms of ATG8. In Pichia angusta (Yeast), this protein is Serine/threonine-protein kinase ATG1.